Here is a 535-residue protein sequence, read N- to C-terminus: Calcium-dependent protein kinase 7 (535 aa).

Positions 1-29 (MGNCCGNPSSATNQSKQGKPKNKNNPFYS) are disordered. The N-myristoyl glycine moiety is linked to residue Gly2. A Protein kinase domain is found at 59–317 (YDLGREVGRG…AAQVLEHTWI (259 aa)). ATP is bound by residues 65–73 (VGRGEFGIT) and Lys88. The Proton acceptor role is filled by Asp183. Position 223 is a phosphoserine (Ser223). Positions 323 to 353 (APNVSLGETVKARLKQFSVMNKLKKRALRVI) are autoinhibitory domain. EF-hand domains follow at residues 360-395 (EEAA…AGQQ), 396-431 (IADT…LKKM), 432-467 (ANDE…ELDN), and 468-504 (TSSE…GTDW). 18 residues coordinate Ca(2+): Asp373, Asn375, Lys379, Glu384, Asp409, Asp411, Asp413, Thr415, Glu420, Asp445, Asn447, Ser449, Tyr451, Glu456, Asp482, Asp484, Asp486, and Arg488. Ser490 is modified (phosphoserine). Glu493 lines the Ca(2+) pocket.

It belongs to the protein kinase superfamily. Ser/Thr protein kinase family. CDPK subfamily.

Its subcellular location is the cell membrane. It carries out the reaction L-seryl-[protein] + ATP = O-phospho-L-seryl-[protein] + ADP + H(+). The catalysed reaction is L-threonyl-[protein] + ATP = O-phospho-L-threonyl-[protein] + ADP + H(+). Its activity is regulated as follows. Activated by calcium. Autophosphorylation may play an important role in the regulation of the kinase activity. Its function is as follows. May play a role in signal transduction pathways that involve calcium as a second messenger. This Arabidopsis thaliana (Mouse-ear cress) protein is Calcium-dependent protein kinase 7 (CPK7).